We begin with the raw amino-acid sequence, 206 residues long: Probable thymidylate kinase (206 aa).

10-17 (GIDGSGKS) contacts ATP.

The protein belongs to the thymidylate kinase family.

The enzyme catalyses dTMP + ATP = dTDP + ADP. The polypeptide is Probable thymidylate kinase (Methanosarcina acetivorans (strain ATCC 35395 / DSM 2834 / JCM 12185 / C2A)).